We begin with the raw amino-acid sequence, 233 residues long: N-(5'-phosphoribosyl)anthranilate isomerase (233 aa).

This sequence belongs to the TrpF family.

The enzyme catalyses N-(5-phospho-beta-D-ribosyl)anthranilate = 1-(2-carboxyphenylamino)-1-deoxy-D-ribulose 5-phosphate. It participates in amino-acid biosynthesis; L-tryptophan biosynthesis; L-tryptophan from chorismate: step 3/5. This chain is N-(5'-phosphoribosyl)anthranilate isomerase, found in Ralstonia pickettii (strain 12J).